The sequence spans 418 residues: Endoglucanase EG-II (418 aa).

Residues 1 to 21 (MNKSVAPLLLAASILYGGAAA) form the signal peptide. Gln22 is subject to Pyrrolidone carboxylic acid. In terms of domain architecture, CBM1 spans 22 to 57 (QQTVWGQCGGIGWSGPTNCAPGSACSTLNPYYAQCI). Residues 58-91 (PGATTITTSTRPPSGPTTTTRATSTSSSTPPTSS) are linker. The tract at residues 63-91 (ITTSTRPPSGPTTTTRATSTSSSTPPTSS) is disordered. The catalytic stretch occupies residues 92-418 (GVRFAGVNIA…SLVSSCLARK (327 aa)). Cys107 and Cys113 are disulfide-bonded. A glycan (N-linked (GlcNAc) asparagine) is linked at Asn124. Cys183 and Cys190 are disulfide-bonded. Glu239 (proton donor/acceptor) is an active-site residue. 2 cysteine pairs are disulfide-bonded: Cys323–Cys359 and Cys364–Cys414. The active-site Nucleophile is Glu350.

This sequence belongs to the glycosyl hydrolase 5 (cellulase A) family.

The protein localises to the secreted. The catalysed reaction is Endohydrolysis of (1-&gt;4)-beta-D-glucosidic linkages in cellulose, lichenin and cereal beta-D-glucans.. Functionally, endoglucanase (EG) that cleaves the internal beta-1,4-glucosidic bonds in cellulose. The degradation of cellulose involves an interplay between different cellulolytic enzymes. Hydrolysis starts with EGs, which cut internal glycosidic linkages to reduce the polymerization degree of the substrate and creates new chain ends for exocellobiohydrolases (CBHs). The CBH release the disaccharide cellobiose from the non-reducing end of the cellulose polymer chain. Finally, beta-1,4-glucosidases hydrolyze the cellobiose and other short cello-oligosaccharides into glucose units. The protein is Endoglucanase EG-II (egl2) of Hypocrea jecorina (strain ATCC 56765 / BCRC 32924 / NRRL 11460 / Rut C-30) (Trichoderma reesei).